The sequence spans 384 residues: Oxoeicosanoid receptor 1 (384 aa).

The tract at residues 1-21 (MELHNLSSPSPSLSSSVLPPS) is disordered. Residues 1–58 (MELHNLSSPSPSLSSSVLPPSFSPSPSSAPSAFTTVGGSSGGPCHPTSSSLVSAFLAP) lie on the Extracellular side of the membrane. N-linked (GlcNAc...) asparagine glycosylation occurs at N5. Residues 7–21 (SSPSPSLSSSVLPPS) are compositionally biased toward low complexity. A helical membrane pass occupies residues 59 to 79 (ILALEFVLGLVGNSLALFIFC). Topologically, residues 80 to 87 (IHTRPWTS) are cytoplasmic. Residues 88–108 (NTVFLVSLVAADFLLISNLPL) traverse the membrane as a helical segment. Residues 109–129 (RVDYYLLHETWRFGAAACKVN) lie on the Extracellular side of the membrane. C126 and C198 form a disulfide bridge. A helical membrane pass occupies residues 130–152 (LFMLSTNRTASVVFLTAIALNRY). The Cytoplasmic segment spans residues 153 to 172 (LKVVQPHHVLSRASVGAAAR). Residues 173–193 (VAGGLWVGILLLNGHLLLSTF) form a helical membrane-spanning segment. At 194–215 (SGPSCLSYRVGTKPSASLRWHQ) the chain is on the extracellular side. The helical transmembrane segment at 216 to 236 (ALYLLEFFLPLALILFAIVSI) threads the bilayer. Topologically, residues 237–256 (GLTIRNRGLGGQAGPQRAMR) are cytoplasmic. Residues 257–277 (VLAMVVAVYTICFLPSIIFGM) form a helical membrane-spanning segment. Over 278 to 297 (ASMVAFWLSACRSLDLCTQL) the chain is Extracellular. A helical membrane pass occupies residues 298 to 318 (FHGSLAFTYLNSVLDPVLYCF). Over 319-384 (SSPNFLHQSR…SLEKEGSSQG (66 aa)) the chain is Cytoplasmic.

It belongs to the G-protein coupled receptor 1 family. Expressed in various tissues except brain. Expression is more intense in liver, kidney, peripheral leukocyte, lung, and spleen than in other tissues. Highly expressed in eosinophils, neutrophils, and lung macrophages.

Its subcellular location is the membrane. Receptor for eicosanoids and polyunsaturated fatty acids such as 5-oxo-6E,8Z,11Z,14Z-eicosatetraenoic acid (5-OXO-ETE), 5(S)-hydroperoxy-6E,8Z,11Z,14Z-eicosatetraenoic acid (5(S)-HPETE) and arachidonic acid. Seems to be coupled to the G(i)/G(o), families of heteromeric G proteins. The chain is Oxoeicosanoid receptor 1 (OXER1) from Homo sapiens (Human).